Consider the following 241-residue polypeptide: PHD finger protein ALFIN-LIKE 1 (241 aa).

The residue at position 2 (alanine 2) is an N-acetylalanine. The disordered stretch occupies residues aspartate 142–glutamate 182. A PHD-type zinc finger spans residues aspartate 185 to lysine 237.

Belongs to the Alfin family. In terms of assembly, interacts with H3K4me3 and to a lesser extent with H3K4me2. In terms of tissue distribution, ubiquitously expressed.

It localises to the nucleus. In terms of biological role, histone-binding component that specifically recognizes H3 tails trimethylated on 'Lys-4' (H3K4me3), which mark transcription start sites of virtually all active genes. The protein is PHD finger protein ALFIN-LIKE 1 (AL1) of Arabidopsis thaliana (Mouse-ear cress).